The primary structure comprises 846 residues: Rho GTPase-activating protein 12 (846 aa).

An SH3 domain is found at 12 to 74 (PGQVYIEVEY…PAQYVKEVTR (63 aa)). Polar residues predominate over residues 152–175 (LTHNNGKFNNDSHSPKVSSQNRTR). The disordered stretch occupies residues 152-241 (LTHNNGKFNN…PPNQGRPDSP (90 aa)). A phosphoserine mark is found at S165 and S176. Residues 191–200 (TSFSQEQSCD) are compositionally biased toward polar residues. Phosphoserine occurs at positions 201, 213, and 215. The span at 224-234 (TEQIRATTPPN) shows a compositional bias: polar residues. Phosphothreonine occurs at positions 230 and 231. S240 is subject to Phosphoserine. Y243 carries the phosphotyrosine modification. WW domains are found at residues 265-298 (IQIN…PPRW) and 358-391 (DYTN…LPKY). Residues 293–316 (WKPPRWTRDASISKGDFQNPGDQE) are disordered. 2 disordered regions span residues 428-466 (DTND…DQEK) and 580-629 (ETDE…TKKN). Residues 445–461 (NESSPSSPKHQDTASSP) show a composition bias toward polar residues. The region spanning 463–575 (DQEKYGLLNV…WFKVLSSTIN (113 aa)) is the PH domain. The segment covering 580–590 (ETDEGIEEEIP) has biased composition (acidic residues). Phosphoserine is present on S592. Over residues 594–609 (GIEKHDKEKEQKDPKK) the composition is skewed to basic and acidic residues. Positions 656–844 (SNLANLCQRE…LILLELSSIF (189 aa)) constitute a Rho-GAP domain.

In terms of biological role, GTPase activator for the Rho-type GTPases by converting them to an inactive GDP-bound state. This chain is Rho GTPase-activating protein 12 (ARHGAP12), found in Homo sapiens (Human).